We begin with the raw amino-acid sequence, 86 residues long: Small ribosomal subunit protein bS20 (86 aa).

Residues 1-11 (MANIKSAKKRA) show a composition bias toward basic residues. Residues 1-26 (MANIKSAKKRAITSEKNRQHNASRRS) form a disordered region.

This sequence belongs to the bacterial ribosomal protein bS20 family.

Binds directly to 16S ribosomal RNA. In Pseudoalteromonas translucida (strain TAC 125), this protein is Small ribosomal subunit protein bS20.